Here is a 76-residue protein sequence, read N- to C-terminus: Proteolipid protein 2 (76 aa).

An MARVEL domain is found at 1–60; the sequence is ISGPWSDFFRALGAVILYLMTSIVVLVERGNNSKGAAGVLGLCAAGLFGYDAYITFPSGT. The helical transmembrane segment at 8 to 28 threads the bilayer; that stretch reads FFRALGAVILYLMTSIVVLVE. N-linked (GlcNAc...) asparagine glycosylation occurs at Asn31. A helical transmembrane segment spans residues 36-56; sequence AAGVLGLCAAGLFGYDAYITF.

It is found in the membrane. Its function is as follows. May play a role in cell differentiation in the intestinal epithelium. The protein is Proteolipid protein 2 (PLP2) of Ovis aries (Sheep).